Here is a 113-residue protein sequence, read N- to C-terminus: Small ribosomal subunit protein bS6 (113 aa).

It belongs to the bacterial ribosomal protein bS6 family.

Its function is as follows. Binds together with bS18 to 16S ribosomal RNA. This is Small ribosomal subunit protein bS6 from Flavobacterium johnsoniae (strain ATCC 17061 / DSM 2064 / JCM 8514 / BCRC 14874 / CCUG 350202 / NBRC 14942 / NCIMB 11054 / UW101) (Cytophaga johnsonae).